The following is a 228-amino-acid chain: MRTWSNFNLQNSASPLMEQIIFFHDHTLIILIMITILVGYIMINLFFNKFINRFFLVGQMIELIWTVLPAITLIFIALPSLRLLYLLDELNNPLITLKTIGHQWYWSYEYSDFNNIEFDSYMIASNELPLNNFRLLDVDNRIILPMNNQIRILVTATDVIHSWTIPSLGVKVDANPGRLNQTNFFINRPGIFYGQCSEICGANHSFMPIVIESISIKNFINWINNYSY.

Residues 1-26 are Mitochondrial intermembrane-facing; it reads MRTWSNFNLQNSASPLMEQIIFFHDH. The helical transmembrane segment at 27–48 threads the bilayer; it reads TLIILIMITILVGYIMINLFFN. The Mitochondrial matrix segment spans residues 49–62; that stretch reads KFINRFFLVGQMIE. A helical membrane pass occupies residues 63-82; the sequence is LIWTVLPAITLIFIALPSLR. Topologically, residues 83-228 are mitochondrial intermembrane; that stretch reads LLYLLDELNN…FINWINNYSY (146 aa). The Cu cation site is built by histidine 161, cysteine 196, glutamate 198, cysteine 200, histidine 204, and methionine 207. Residue glutamate 198 coordinates Mg(2+).

Belongs to the cytochrome c oxidase subunit 2 family. As to quaternary structure, component of the cytochrome c oxidase (complex IV, CIV), a multisubunit enzyme composed of a catalytic core of 3 subunits and several supernumerary subunits. The complex exists as a monomer or a dimer and forms supercomplexes (SCs) in the inner mitochondrial membrane with ubiquinol-cytochrome c oxidoreductase (cytochrome b-c1 complex, complex III, CIII). Cu cation serves as cofactor.

Its subcellular location is the mitochondrion inner membrane. It carries out the reaction 4 Fe(II)-[cytochrome c] + O2 + 8 H(+)(in) = 4 Fe(III)-[cytochrome c] + 2 H2O + 4 H(+)(out). In terms of biological role, component of the cytochrome c oxidase, the last enzyme in the mitochondrial electron transport chain which drives oxidative phosphorylation. The respiratory chain contains 3 multisubunit complexes succinate dehydrogenase (complex II, CII), ubiquinol-cytochrome c oxidoreductase (cytochrome b-c1 complex, complex III, CIII) and cytochrome c oxidase (complex IV, CIV), that cooperate to transfer electrons derived from NADH and succinate to molecular oxygen, creating an electrochemical gradient over the inner membrane that drives transmembrane transport and the ATP synthase. Cytochrome c oxidase is the component of the respiratory chain that catalyzes the reduction of oxygen to water. Electrons originating from reduced cytochrome c in the intermembrane space (IMS) are transferred via the dinuclear copper A center (CU(A)) of subunit 2 and heme A of subunit 1 to the active site in subunit 1, a binuclear center (BNC) formed by heme A3 and copper B (CU(B)). The BNC reduces molecular oxygen to 2 water molecules using 4 electrons from cytochrome c in the IMS and 4 protons from the mitochondrial matrix. The chain is Cytochrome c oxidase subunit 2 (COII) from Galleria mellonella (Greater wax moth).